The chain runs to 244 residues: Protein A47 (244 aa).

This sequence belongs to the orthopoxvirus A47 protein family.

This chain is Protein A47, found in Variola virus.